Reading from the N-terminus, the 201-residue chain is UPF0301 protein Arad_1256 (201 aa).

Belongs to the UPF0301 (AlgH) family.

This is UPF0301 protein Arad_1256 from Rhizobium rhizogenes (strain K84 / ATCC BAA-868) (Agrobacterium radiobacter).